The sequence spans 443 residues: ATP-dependent protease ATPase subunit HslU (443 aa).

ATP-binding positions include V18 and 60–65 (GVGKTE). The interval 139–160 (AKNNWGQPEESGEPSSARQNFR) is disordered. Residues D256, E321, and R393 each contribute to the ATP site.

The protein belongs to the ClpX chaperone family. HslU subfamily. In terms of assembly, a double ring-shaped homohexamer of HslV is capped on each side by a ring-shaped HslU homohexamer. The assembly of the HslU/HslV complex is dependent on binding of ATP.

The protein resides in the cytoplasm. Functionally, ATPase subunit of a proteasome-like degradation complex; this subunit has chaperone activity. The binding of ATP and its subsequent hydrolysis by HslU are essential for unfolding of protein substrates subsequently hydrolyzed by HslV. HslU recognizes the N-terminal part of its protein substrates and unfolds these before they are guided to HslV for hydrolysis. This is ATP-dependent protease ATPase subunit HslU from Sodalis glossinidius (strain morsitans).